We begin with the raw amino-acid sequence, 441 residues long: GTPase Der (441 aa).

2 EngA-type G domains span residues 4–169 (SIVA…PPEA) and 178–353 (PRIA…QNRN). Residues 10 to 17 (GRPNVGKS), 57 to 61 (DTGGI), 120 to 123 (NKVD), 184 to 191 (GKPNVGKS), 231 to 235 (DTAGL), and 296 to 299 (NKWD) each bind GTP. The 85-residue stretch at 354 to 438 (LRISTGVLNE…SLKFFIRERK (85 aa)) folds into the KH-like domain.

This sequence belongs to the TRAFAC class TrmE-Era-EngA-EngB-Septin-like GTPase superfamily. EngA (Der) GTPase family. Associates with the 50S ribosomal subunit.

Its function is as follows. GTPase that plays an essential role in the late steps of ribosome biogenesis. In Lachnoclostridium phytofermentans (strain ATCC 700394 / DSM 18823 / ISDg) (Clostridium phytofermentans), this protein is GTPase Der.